Here is a 333-residue protein sequence, read N- to C-terminus: Holliday junction branch migration complex subunit RuvB (333 aa).

The interval 1 to 181 (MTRILDNDLI…FGITGHMEYY (181 aa)) is large ATPase domain (RuvB-L). Residues Leu-20, Arg-21, Gly-62, Lys-65, Thr-66, Thr-67, 128 to 130 (EDF), Arg-171, Tyr-181, and Arg-218 contribute to the ATP site. Thr-66 is a Mg(2+) binding site. The small ATPAse domain (RuvB-S) stretch occupies residues 182-252 (QTADLTEIVE…ITDKALTMLD (71 aa)). Residues 255–333 (QEGLDYVDQK…HLGYPYEKKH (79 aa)) are head domain (RuvB-H). DNA is bound by residues Arg-291, Arg-310, Arg-312, and Arg-315.

It belongs to the RuvB family. Homohexamer. Forms an RuvA(8)-RuvB(12)-Holliday junction (HJ) complex. HJ DNA is sandwiched between 2 RuvA tetramers; dsDNA enters through RuvA and exits via RuvB. An RuvB hexamer assembles on each DNA strand where it exits the tetramer. Each RuvB hexamer is contacted by two RuvA subunits (via domain III) on 2 adjacent RuvB subunits; this complex drives branch migration. In the full resolvosome a probable DNA-RuvA(4)-RuvB(12)-RuvC(2) complex forms which resolves the HJ.

Its subcellular location is the cytoplasm. The catalysed reaction is ATP + H2O = ADP + phosphate + H(+). In terms of biological role, the RuvA-RuvB-RuvC complex processes Holliday junction (HJ) DNA during genetic recombination and DNA repair, while the RuvA-RuvB complex plays an important role in the rescue of blocked DNA replication forks via replication fork reversal (RFR). RuvA specifically binds to HJ cruciform DNA, conferring on it an open structure. The RuvB hexamer acts as an ATP-dependent pump, pulling dsDNA into and through the RuvAB complex. RuvB forms 2 homohexamers on either side of HJ DNA bound by 1 or 2 RuvA tetramers; 4 subunits per hexamer contact DNA at a time. Coordinated motions by a converter formed by DNA-disengaged RuvB subunits stimulates ATP hydrolysis and nucleotide exchange. Immobilization of the converter enables RuvB to convert the ATP-contained energy into a lever motion, pulling 2 nucleotides of DNA out of the RuvA tetramer per ATP hydrolyzed, thus driving DNA branch migration. The RuvB motors rotate together with the DNA substrate, which together with the progressing nucleotide cycle form the mechanistic basis for DNA recombination by continuous HJ branch migration. Branch migration allows RuvC to scan DNA until it finds its consensus sequence, where it cleaves and resolves cruciform DNA. In Streptococcus equi subsp. zooepidemicus (strain MGCS10565), this protein is Holliday junction branch migration complex subunit RuvB.